The following is a 442-amino-acid chain: Protein PRRC1-B (442 aa).

The tract at residues 1-24 (MMEESGIETTPPSTPPPSTIGTSV) is disordered.

It belongs to the PRRC1 family.

It is found in the golgi apparatus. The polypeptide is Protein PRRC1-B (prrc1-b) (Xenopus laevis (African clawed frog)).